Here is an 82-residue protein sequence, read N- to C-terminus: Putative membrane protein insertion efficiency factor (82 aa).

This sequence belongs to the UPF0161 family.

The protein localises to the cell inner membrane. Functionally, could be involved in insertion of integral membrane proteins into the membrane. The chain is Putative membrane protein insertion efficiency factor from Aeromonas salmonicida (strain A449).